Consider the following 463-residue polypeptide: MATSLMKSSLALHAAPRPRSVRLSATSSRVDSPQVSVVLGTQWGDEGKGKLVDNLAQQFDIVARAQGGANAGHTIYDETGRKFALHLVPSGILNPKATCVIGNGVVLHLPGLFEEIRRLKEKGVQVDGRLLVSDRAHLLFDLHKEIDGLREAELAGDGKQIGTTKRGIGPAYSSKATRNGLRVCDLFDRATFKTKLTNLAADGAKRFGEKFAYDVEGDIAAYEKLAEEIRPFVVDTVEYLHEALQSGKRILIEGANATMLDLDFGTYPYVTSSNPSIGGIATGLGLPPSSYDDIVGVAKAYTTRVGAGPYPTEIHGKLAEDLRAVGHEYGTTTGRPRRIGWMDIVALRYACKINGVTHINLTKLDVLDNLEEIQVGVGYKTKEGKMLKSVPADLHTLENVEVVYETLPGWQADISAARQWAQLPAAAQAYVQRIEDLIGIPVKWIGVGPGRDALVVKPEAPKK.

GTP contacts are provided by residues 44 to 50 (GDEGKGK) and 72 to 74 (GHT). D45 serves as the catalytic Proton acceptor. Residues D45 and G72 each contribute to the Mg(2+) site. Residues 45-48 (DEGK), 70-73 (NAGH), T164, R178, N256, T271, and R335 contribute to the IMP site. The Proton donor role is filled by H73. Substrate is bound at residue 331–337 (TTTGRPR). GTP contacts are provided by residues R337, 363–365 (KLD), and 446–448 (GVG).

Belongs to the adenylosuccinate synthetase family. As to quaternary structure, homodimer. It depends on Mg(2+) as a cofactor.

The protein localises to the plastid. The protein resides in the chloroplast. The enzyme catalyses IMP + L-aspartate + GTP = N(6)-(1,2-dicarboxyethyl)-AMP + GDP + phosphate + 2 H(+). The protein operates within purine metabolism; AMP biosynthesis via de novo pathway; AMP from IMP: step 1/2. Its function is as follows. Plays an important role in the de novo pathway and in the salvage pathway of purine nucleotide biosynthesis. Catalyzes the first committed step in the biosynthesis of AMP from IMP. The chain is Adenylosuccinate synthetase, chloroplastic from Chlamydomonas reinhardtii (Chlamydomonas smithii).